Consider the following 188-residue polypeptide: Peptidyl-tRNA hydrolase (188 aa).

TRNA is bound at residue tyrosine 14. The Proton acceptor role is filled by histidine 19. TRNA is bound by residues tyrosine 64, asparagine 66, and asparagine 112.

This sequence belongs to the PTH family. Monomer.

The protein localises to the cytoplasm. The enzyme catalyses an N-acyl-L-alpha-aminoacyl-tRNA + H2O = an N-acyl-L-amino acid + a tRNA + H(+). Its function is as follows. Hydrolyzes ribosome-free peptidyl-tRNAs (with 1 or more amino acids incorporated), which drop off the ribosome during protein synthesis, or as a result of ribosome stalling. In terms of biological role, catalyzes the release of premature peptidyl moieties from peptidyl-tRNA molecules trapped in stalled 50S ribosomal subunits, and thus maintains levels of free tRNAs and 50S ribosomes. The protein is Peptidyl-tRNA hydrolase of Clostridium tetani (strain Massachusetts / E88).